Here is a 486-residue protein sequence, read N- to C-terminus: Cysteine--tRNA ligase (486 aa).

Cys30 is a binding site for Zn(2+). The 'HIGH' region motif lies at 32 to 42 (PTVYDRAHLGN). Zn(2+) is bound by residues Cys221, His246, and Glu250. A 'KMSKS' region motif is present at residues 279 to 283 (KMSKS). Lys282 is a binding site for ATP.

This sequence belongs to the class-I aminoacyl-tRNA synthetase family. As to quaternary structure, monomer. Requires Zn(2+) as cofactor.

It localises to the cytoplasm. The enzyme catalyses tRNA(Cys) + L-cysteine + ATP = L-cysteinyl-tRNA(Cys) + AMP + diphosphate. The sequence is that of Cysteine--tRNA ligase from Cereibacter sphaeroides (strain ATCC 17029 / ATH 2.4.9) (Rhodobacter sphaeroides).